The following is a 163-amino-acid chain: NADH-quinone oxidoreductase subunit I (163 aa).

4Fe-4S ferredoxin-type domains lie at 53–83 (LRRY…IEAG) and 94–123 (VRYD…EGPN). 8 residues coordinate [4Fe-4S] cluster: Cys63, Cys66, Cys69, Cys73, Cys103, Cys106, Cys109, and Cys113.

The protein belongs to the complex I 23 kDa subunit family. In terms of assembly, NDH-1 is composed of 14 different subunits. Subunits NuoA, H, J, K, L, M, N constitute the membrane sector of the complex. It depends on [4Fe-4S] cluster as a cofactor.

It localises to the cell inner membrane. It catalyses the reaction a quinone + NADH + 5 H(+)(in) = a quinol + NAD(+) + 4 H(+)(out). In terms of biological role, NDH-1 shuttles electrons from NADH, via FMN and iron-sulfur (Fe-S) centers, to quinones in the respiratory chain. The immediate electron acceptor for the enzyme in this species is believed to be ubiquinone. Couples the redox reaction to proton translocation (for every two electrons transferred, four hydrogen ions are translocated across the cytoplasmic membrane), and thus conserves the redox energy in a proton gradient. The protein is NADH-quinone oxidoreductase subunit I of Brucella abortus (strain S19).